Reading from the N-terminus, the 288-residue chain is MEIIMQTAQYIIELLKAVFLGIVEGITEWLPISSTGHLILVNEFLNLRQSKDFIDMFNIVMHLGAILAVMVIYFKRLNPFQPGKTAREVQLTWKLWLKVVIACIPSAFFGLLLDDWMEAHLSNFFVVAIMLVVYGIAFIWIEDRNRRVDPKVTDLARMSYKTAFYIGLFQVLSIIPGTSRSGATILGGIIVGTSRSVAADFTFFLGIPTMFGYSGLKAVKYFIDGNTLTGGQAAILLVASVTAFLVSLFVIRFLMNYIKKHDFTVFGKYRIVLGIIVLFYGAVKLIFG.

Helical transmembrane passes span 25–45 (GITEWLPISSTGHLILVNEFL), 53–73 (FIDMFNIVMHLGAILAVMVIY), 93–113 (WKLWLKVVIACIPSAFFGLLL), 121–141 (LSNFFVVAIMLVVYGIAFIWI), 171–191 (VLSIIPGTSRSGATILGGIIV), 196–216 (SVAADFTFFLGIPTMFGYSGL), 231–251 (GQAAILLVASVTAFLVSLFVI), and 263–283 (FTVFGKYRIVLGIIVLFYGAV).

Belongs to the UppP family.

The protein localises to the cell membrane. It carries out the reaction di-trans,octa-cis-undecaprenyl diphosphate + H2O = di-trans,octa-cis-undecaprenyl phosphate + phosphate + H(+). Functionally, catalyzes the dephosphorylation of undecaprenyl diphosphate (UPP). Confers resistance to bacitracin. In Streptococcus thermophilus (strain CNRZ 1066), this protein is Undecaprenyl-diphosphatase.